We begin with the raw amino-acid sequence, 678 residues long: Methionine--tRNA ligase (678 aa).

The 'HIGH' region signature appears at 14 to 24 (PYANGSIHLGH). 4 residues coordinate Zn(2+): C145, C148, C158, and C161. The 'KMSKS' region motif lies at 331–335 (KMSKS). Residue K334 participates in ATP binding. Residues 576-678 (AFAAVDLRIA…SGAKPGQRVK (103 aa)) enclose the tRNA-binding domain.

This sequence belongs to the class-I aminoacyl-tRNA synthetase family. MetG type 1 subfamily. Homodimer. Zn(2+) serves as cofactor.

The protein localises to the cytoplasm. The enzyme catalyses tRNA(Met) + L-methionine + ATP = L-methionyl-tRNA(Met) + AMP + diphosphate. In terms of biological role, is required not only for elongation of protein synthesis but also for the initiation of all mRNA translation through initiator tRNA(fMet) aminoacylation. The sequence is that of Methionine--tRNA ligase from Ectopseudomonas mendocina (strain ymp) (Pseudomonas mendocina).